We begin with the raw amino-acid sequence, 471 residues long: UDP-N-acetylmuramate--L-alanine ligase (471 aa).

ATP is bound at residue 125–131 (GTHGKTT).

Belongs to the MurCDEF family.

It is found in the cytoplasm. It catalyses the reaction UDP-N-acetyl-alpha-D-muramate + L-alanine + ATP = UDP-N-acetyl-alpha-D-muramoyl-L-alanine + ADP + phosphate + H(+). It functions in the pathway cell wall biogenesis; peptidoglycan biosynthesis. In terms of biological role, cell wall formation. The sequence is that of UDP-N-acetylmuramate--L-alanine ligase from Kineococcus radiotolerans (strain ATCC BAA-149 / DSM 14245 / SRS30216).